The chain runs to 279 residues: Large ribosomal subunit protein uL2 (279 aa).

Disordered stretches follow at residues 1–43 (MGIK…TAGR) and 207–279 (KAGR…PGKH). Residues 8-22 (PTTNGRRNMTASDFS) are compositionally biased toward polar residues. Residues 23–33 (EITKTKPEKSL) show a composition bias toward basic and acidic residues. The span at 34–43 (LDSQSHTAGR) shows a compositional bias: polar residues. Basic residues-rich tracts occupy residues 209 to 219 (GRTRWQGKRPT) and 254 to 279 (TLGKKTRNKKARSNKLIVRGRRPGKH).

It belongs to the universal ribosomal protein uL2 family. In terms of assembly, part of the 50S ribosomal subunit. Forms a bridge to the 30S subunit in the 70S ribosome.

Functionally, one of the primary rRNA binding proteins. Required for association of the 30S and 50S subunits to form the 70S ribosome, for tRNA binding and peptide bond formation. It has been suggested to have peptidyltransferase activity; this is somewhat controversial. Makes several contacts with the 16S rRNA in the 70S ribosome. The chain is Large ribosomal subunit protein uL2 from Lactiplantibacillus plantarum (strain ATCC BAA-793 / NCIMB 8826 / WCFS1) (Lactobacillus plantarum).